The primary structure comprises 238 residues: Tyrosine recombinase XerD-like (238 aa).

A Core-binding (CB) domain is found at 1 to 75; sequence MKLPNEIEEY…SANQYFLFLY (75 aa). The region spanning 90–238 is the Tyr recombinase domain; it reads VQKKTQSSES…TITALEKYYR (149 aa). Residues Lys-154 and Arg-204 contribute to the active site. Tyr-236 serves as the catalytic O-(3'-phospho-DNA)-tyrosine intermediate.

This sequence belongs to the 'phage' integrase family. XerD-like subfamily.

Its subcellular location is the cytoplasm. Functionally, putative tyrosine recombinase. Not involved in the cutting and rejoining of the recombining DNA molecules on dif(SL) site. This is Tyrosine recombinase XerD-like from Lactococcus lactis subsp. cremoris (strain SK11).